We begin with the raw amino-acid sequence, 391 residues long: S-adenosylmethionine synthase (391 aa).

H14 is an ATP binding site. D16 provides a ligand contact to Mg(2+). A K(+)-binding site is contributed by E42. Residues E55 and Q98 each coordinate L-methionine. The flexible loop stretch occupies residues 98–108; that stretch reads QSVDIAIGVDE. Residues 172–174, 238–239, D247, 253–254, A270, and K274 contribute to the ATP site; these read DGK, RF, and RK. Position 247 (D247) interacts with L-methionine. K278 contributes to the L-methionine binding site.

The protein belongs to the AdoMet synthase family. In terms of assembly, homotetramer; dimer of dimers. Mg(2+) is required as a cofactor. It depends on K(+) as a cofactor.

The protein localises to the cytoplasm. The catalysed reaction is L-methionine + ATP + H2O = S-adenosyl-L-methionine + phosphate + diphosphate. The protein operates within amino-acid biosynthesis; S-adenosyl-L-methionine biosynthesis; S-adenosyl-L-methionine from L-methionine: step 1/1. Catalyzes the formation of S-adenosylmethionine (AdoMet) from methionine and ATP. The overall synthetic reaction is composed of two sequential steps, AdoMet formation and the subsequent tripolyphosphate hydrolysis which occurs prior to release of AdoMet from the enzyme. In Clostridium botulinum (strain Okra / Type B1), this protein is S-adenosylmethionine synthase.